Here is a 170-residue protein sequence, read N- to C-terminus: uncharacterized protein (170 aa).

Residues 96-116 (FSAISIGSFPIVLFLSLFFFD) form a helical membrane-spanning segment.

The protein resides in the membrane. This is an uncharacterized protein from Borreliella burgdorferi (strain ATCC 35210 / DSM 4680 / CIP 102532 / B31) (Borrelia burgdorferi).